The following is a 353-amino-acid chain: Histidinol-phosphate aminotransferase 1 (353 aa).

An N6-(pyridoxal phosphate)lysine modification is found at Lys211.

It belongs to the class-II pyridoxal-phosphate-dependent aminotransferase family. Histidinol-phosphate aminotransferase subfamily. Homodimer. Pyridoxal 5'-phosphate serves as cofactor.

It carries out the reaction L-histidinol phosphate + 2-oxoglutarate = 3-(imidazol-4-yl)-2-oxopropyl phosphate + L-glutamate. The protein operates within amino-acid biosynthesis; L-histidine biosynthesis; L-histidine from 5-phospho-alpha-D-ribose 1-diphosphate: step 7/9. This Nostoc sp. (strain PCC 7120 / SAG 25.82 / UTEX 2576) protein is Histidinol-phosphate aminotransferase 1 (hisC1).